Consider the following 50-residue polypeptide: uncharacterized protein (50 aa).

This is an uncharacterized protein from Bacillus subtilis (strain 168).